Here is a 248-residue protein sequence, read N- to C-terminus: ATP synthase subunit a (248 aa).

The next 5 membrane-spanning stretches (helical) occupy residues 31–51 (GQVL…VILG), 90–110 (VPYV…GNLF), 129–149 (INTT…AGIS), 195–215 (VIAV…MVLF), and 216–236 (LFTG…YIGE).

It belongs to the ATPase A chain family. In terms of assembly, F-type ATPases have 2 components, CF(1) - the catalytic core - and CF(0) - the membrane proton channel. CF(1) has five subunits: alpha(3), beta(3), gamma(1), delta(1), epsilon(1). CF(0) has four main subunits: a, b, b' and c.

Its subcellular location is the cellular thylakoid membrane. In terms of biological role, key component of the proton channel; it plays a direct role in the translocation of protons across the membrane. The sequence is that of ATP synthase subunit a from Synechococcus sp. (strain JA-2-3B'a(2-13)) (Cyanobacteria bacterium Yellowstone B-Prime).